A 250-amino-acid polypeptide reads, in one-letter code: GTP cyclohydrolase 1 type 2 homolog (250 aa).

The a divalent metal cation site is built by His-63, His-64, Asp-100, His-218, and Glu-222.

The protein belongs to the GTP cyclohydrolase I type 2/NIF3 family. Homohexamer.

This Pyrococcus abyssi (strain GE5 / Orsay) protein is GTP cyclohydrolase 1 type 2 homolog.